The following is a 1382-amino-acid chain: Insulin receptor (1382 aa).

The signal sequence occupies residues 1-27; sequence MATGGRRGAAAAPLLVAVAALLLGAAG. Extracellular segments lie at residues 28–758 and 763–956; these read HLYP…PRPS and SLGD…NIAK. A disulfide bridge links Cys-35 with Cys-53. 4 N-linked (GlcNAc...) asparagine glycosylation sites follow: Asn-43, Asn-52, Asn-105, and Asn-138. 9 disulfides stabilise this stretch: Cys-153–Cys-182, Cys-186–Cys-209, Cys-196–Cys-215, Cys-219–Cys-228, Cys-223–Cys-234, Cys-235–Cys-243, Cys-239–Cys-252, Cys-255–Cys-264, and Cys-268–Cys-280. A glycan (N-linked (GlcNAc...) asparagine) is linked at Asn-242. N-linked (GlcNAc...) asparagine glycosylation occurs at Asn-282. Cystine bridges form between Cys-286–Cys-311, Cys-293–Cys-301, Cys-315–Cys-328, Cys-331–Cys-335, and Cys-339–Cys-360. Asn-322 carries an N-linked (GlcNAc...) asparagine glycan. N-linked (GlcNAc...) asparagine glycosylation is present at Asn-364. Ser-400 carries the phosphoserine modification. The residue at position 401 (Tyr-401) is a Phosphotyrosine. Ser-407 carries the post-translational modification Phosphoserine. Residues Asn-424 and Asn-445 are each glycosylated (N-linked (GlcNAc...) asparagine). Residues Cys-462 and Cys-495 are joined by a disulfide bond. N-linked (GlcNAc...) asparagine glycosylation is found at Asn-541, Asn-633, Asn-651, and Asn-698. The Fibronectin type-III 1 domain maps to 624–726; that stretch reads VPLDPISVSN…SQILKELEES (103 aa). 2 cysteine pairs are disulfide-bonded: Cys-674-Cys-899 and Cys-825-Cys-834. The tract at residues 686–708 is disordered; sequence SPPFESEDSQKHNQSEYEDSAGE. The insulin-binding stretch occupies residues 733 to 741; sequence EDYLHNVVF. The segment at 746–766 is disordered; that stretch reads TSSGTGAEDPRPSRKRRSLGD. Fibronectin type-III domains are found at residues 757–842 and 853–947; these read PSRK…YVSA and IVGP…VTDY. Residues Asn-769 and Asn-782 are each glycosylated (N-linked (GlcNAc...) asparagine). N-linked (GlcNAc...) asparagine glycans are attached at residues Asn-920 and Asn-933. A helical transmembrane segment spans residues 957-979; that stretch reads IIIGPLIFVFLFSVVIGSIYLFL. Residues 980 to 1382 are Cytoplasmic-facing; that stretch reads RKRQPDGPLG…ILTLPRSNPS (403 aa). Phosphotyrosine; by autocatalysis occurs at positions 992, 999, and 1011. Residue Tyr-999 is a region of interest, important for interaction with IRS1, SHC1 and STAT5B. Positions 1023-1298 constitute a Protein kinase domain; sequence ITLLRELGQG…LLKDDLHPSF (276 aa). The ATP site is built by Ser-1033 and Lys-1057. Lys-1079 is covalently cross-linked (Glycyl lysine isopeptide (Lys-Gly) (interchain with G-Cter in ubiquitin)). Cys-1083 carries the post-translational modification S-nitrosocysteine. 1104 to 1110 provides a ligand contact to ATP; it reads ELMAHGD. Asp-1159 serves as the catalytic Proton donor/acceptor. Residues 1163–1164 and Asp-1177 each bind ATP; that span reads RN. 5 positions are modified to phosphotyrosine; by autocatalysis: Tyr-1185, Tyr-1189, Tyr-1190, Tyr-1355, and Tyr-1361. The disordered stretch occupies residues 1360 to 1382; the sequence is PYTHMNGGKKNGRILTLPRSNPS. The interval 1361–1364 is PIK3R1-binding; it reads YTHM.

It belongs to the protein kinase superfamily. Tyr protein kinase family. Insulin receptor subfamily. As to quaternary structure, tetramer of 2 alpha and 2 beta chains linked by disulfide bonds. The alpha chains carry the insulin-binding regions, while the beta chains carry the kinase domain. Forms a hybrid receptor with IGF1R, the hybrid is a tetramer consisting of 1 alpha chain and 1 beta chain of INSR and 1 alpha chain and 1 beta chain of IGF1R. Interacts with SORBS1 but dissociates from it following insulin stimulation. Binds SH2B2. Activated form of INSR interacts (via Tyr-999) with the PTB/PID domains of IRS1 and SHC1. The sequences surrounding the phosphorylated NPXY motif contribute differentially to either IRS1 or SHC1 recognition. Interacts (via tyrosines in the C-terminus) with IRS2 (via PTB domain and 591-786 AA); the 591-786 would be the primary anchor of IRS2 to INSR while the PTB domain would have a stabilizing action on the interaction with INSR. Interacts with the SH2 domains of the 85 kDa regulatory subunit of PI3K (PIK3R1) in vitro, when autophosphorylated on tyrosine residues. Interacts with SOCS7. Interacts (via the phosphorylated Tyr-999), with SOCS3. Interacts (via the phosphorylated Tyr-1185, Tyr-1189, Tyr-1190) with SOCS1. Interacts with CAV2 (tyrosine-phosphorylated form); the interaction is increased with 'Tyr-27'phosphorylation of CAV2. Interacts with ARRB2. Interacts with GRB10; this interaction blocks the association between IRS1/IRS2 and INSR, significantly reduces insulin-stimulated tyrosine phosphorylation of IRS1 and IRS2 and thus decreases insulin signaling. Interacts with GRB7. Interacts with PDPK1. Interacts (via Tyr-1190) with GRB14 (via BPS domain); this interaction protects the tyrosines in the activation loop from dephosphorylation, but promotes dephosphorylation of Tyr-999, this results in decreased interaction with, and phosphorylation of, IRS1. Interacts (via subunit alpha) with ENPP1 (via 485-599 AA); this interaction blocks autophosphorylation. Interacts with PTPRE; this interaction is dependent of Tyr-1185, Tyr-1189 and Tyr-1190 of the INSR. Interacts with STAT5B (via SH2 domain). Interacts with PTPRF. Interacts with ATIC; ATIC together with PRKAA2/AMPK2 and HACD3/PTPLAD1 is proposed to be part of a signaling netwok regulating INSR autophosphorylation and endocytosis. Interacts with the cone snail venom insulin Con-Ins G1. Interacts with the insulin receptor SORL1; this interaction strongly increases its surface exposure, hence strengthens insulin signal reception. Interacts (tyrosine phosphorylated) with CCDC88A/GIV (via SH2-like region); binding requires autophosphorylation of the INSR C-terminal region. Interacts with GNAI3; the interaction is probably mediated by CCDC88A/GIV. Interacts with LMBRD1. Interacts (in response to insulin stimulation) with NCK1; this interaction may recruit PTPN1 to mediate INSR dephosphorylation. Interacts with CD248; this interaction diminishes INSR autophosphorylation. Post-translationally, after being transported from the endoplasmic reticulum to the Golgi apparatus, the single glycosylated precursor is further glycosylated and then cleaved, followed by its transport to the plasma membrane. In terms of processing, autophosphorylated on tyrosine residues in response to insulin. Phosphorylation of Tyr-999 is required for binding to IRS1, SHC1 and STAT5B. Dephosphorylated by PTPRE at Tyr-999, Tyr-1185, Tyr-1189 and Tyr-1190. May also be phosphorylated at Tyr-1185 and Tyr-1190 by mTORC2. Dephosphorylated by PTPRF and PTPN1. Dephosphorylated by PTPN2; down-regulates insulin-induced signaling. Dephosphorylation at Tyr-1189 and Tyr-1190 requires the SH2/SH3 adapter protein NCK1, probably to recruit its interaction partner PTPN1. S-nitrosylation at Cys-1083 by BLVRB inhibits the receptor tyrosine kinase, thereby inhibiting insulin signaling. Post-translationally, ubiquitinated by MARCHF1; leading to degradation thereby reducing surface INSR expression. Isoform Long and isoform Short are predominantly expressed in tissue targets of insulin metabolic effects: liver, adipose tissue and skeletal muscle but are also expressed in the peripheral nerve, kidney, pulmonary alveoli, pancreatic acini, placenta vascular endothelium, fibroblasts, monocytes, granulocytes, erythrocytes and skin. Isoform Short is preferentially expressed in fetal cells such as fetal fibroblasts, muscle, liver and kidney. Found as a hybrid receptor with IGF1R in muscle, heart, kidney, adipose tissue, skeletal muscle, hepatoma, fibroblasts, spleen and placenta (at protein level). Overexpressed in several tumors, including breast, colon, lung, ovary, and thyroid carcinomas.

The protein localises to the cell membrane. It localises to the late endosome. The protein resides in the lysosome. It carries out the reaction L-tyrosyl-[protein] + ATP = O-phospho-L-tyrosyl-[protein] + ADP + H(+). Activated in response to insulin. Autophosphorylation activates the kinase activity. PTPN1, PTPRE and PTPRF dephosphorylate important tyrosine residues, thereby reducing INSR activity. Inhibited by ENPP1. GRB10 and GRB14 inhibit the catalytic activity of the INSR, they block access of substrates to the activated receptor. SOCS1 and SOCS3 act as negative regulators of INSR activity, they bind to the activated INRS and interfere with the phosphorylation of INSR substrates. Functionally, receptor tyrosine kinase which mediates the pleiotropic actions of insulin. Binding of insulin leads to phosphorylation of several intracellular substrates, including, insulin receptor substrates (IRS1, 2, 3, 4), SHC, GAB1, CBL and other signaling intermediates. Each of these phosphorylated proteins serve as docking proteins for other signaling proteins that contain Src-homology-2 domains (SH2 domain) that specifically recognize different phosphotyrosine residues, including the p85 regulatory subunit of PI3K and SHP2. Phosphorylation of IRSs proteins lead to the activation of two main signaling pathways: the PI3K-AKT/PKB pathway, which is responsible for most of the metabolic actions of insulin, and the Ras-MAPK pathway, which regulates expression of some genes and cooperates with the PI3K pathway to control cell growth and differentiation. Binding of the SH2 domains of PI3K to phosphotyrosines on IRS1 leads to the activation of PI3K and the generation of phosphatidylinositol-(3, 4, 5)-triphosphate (PIP3), a lipid second messenger, which activates several PIP3-dependent serine/threonine kinases, such as PDPK1 and subsequently AKT/PKB. The net effect of this pathway is to produce a translocation of the glucose transporter SLC2A4/GLUT4 from cytoplasmic vesicles to the cell membrane to facilitate glucose transport. Moreover, upon insulin stimulation, activated AKT/PKB is responsible for: anti-apoptotic effect of insulin by inducing phosphorylation of BAD; regulates the expression of gluconeogenic and lipogenic enzymes by controlling the activity of the winged helix or forkhead (FOX) class of transcription factors. Another pathway regulated by PI3K-AKT/PKB activation is mTORC1 signaling pathway which regulates cell growth and metabolism and integrates signals from insulin. AKT mediates insulin-stimulated protein synthesis by phosphorylating TSC2 thereby activating mTORC1 pathway. The Ras/RAF/MAP2K/MAPK pathway is mainly involved in mediating cell growth, survival and cellular differentiation of insulin. Phosphorylated IRS1 recruits GRB2/SOS complex, which triggers the activation of the Ras/RAF/MAP2K/MAPK pathway. In addition to binding insulin, the insulin receptor can bind insulin-like growth factors (IGFI and IGFII). Isoform Short has a higher affinity for IGFII binding. When present in a hybrid receptor with IGF1R, binds IGF1. PubMed:12138094 shows that hybrid receptors composed of IGF1R and INSR isoform Long are activated with a high affinity by IGF1, with low affinity by IGF2 and not significantly activated by insulin, and that hybrid receptors composed of IGF1R and INSR isoform Short are activated by IGF1, IGF2 and insulin. In contrast, PubMed:16831875 shows that hybrid receptors composed of IGF1R and INSR isoform Long and hybrid receptors composed of IGF1R and INSR isoform Short have similar binding characteristics, both bind IGF1 and have a low affinity for insulin. In adipocytes, inhibits lipolysis. The sequence is that of Insulin receptor (INSR) from Homo sapiens (Human).